The sequence spans 196 residues: MDDTLFQLKFTAKQLEKLAKKAEKDSKAEQAKVKKALQQKNVECARVYAENAIRKKNEGVNWLRMASRVDAVASKVQTAVTMKGVTKNMAQVTKALDKALSAMDLQKVSAVMDRFEQQVQNLDVHTSVMEDSVSSATTLTTPQEQVDSLIVQIAEENGLEVLDQLSQLPEGASAVGESSVRSQEDQLSRRLAALRN.

Met1 is subject to N-acetylmethionine. Positions 5-42 form a coiled coil; it reads LFQLKFTAKQLEKLAKKAEKDSKAEQAKVKKALQQKNV. Ser101 is subject to Phosphoserine. Positions 102–124 form a coiled coil; the sequence is AMDLQKVSAVMDRFEQQVQNLDV. Ser173 is subject to Phosphoserine. Residues 185–195 carry the MIT-interacting motif motif; the sequence is DQLSRRLAALR.

Belongs to the SNF7 family. In terms of assembly, probable peripherally associated component of the endosomal sorting required for transport complex III (ESCRT-III). ESCRT-III components are thought to multimerize to form a flat lattice on the perimeter membrane of the endosome. Several assembly forms of ESCRT-III may exist that interact and act sequentially. Self-associates. Interacts with CHMP1B. Interacts with VPS4A. Interacts with VPS4B. Interacts with PHF1. Interacts with IST1. Interacts with MITD1. Highly expressed in adult heart, kidney and liver. Expressed at lower levels in adult colon, spleen, lung, brain, testis and muscle. Also expressed in myoblasts and embryo fibroblasts.

The protein resides in the cytoplasm. The protein localises to the endosome membrane. Its subcellular location is the nucleus matrix. In terms of biological role, probable peripherally associated component of the endosomal sorting required for transport complex III (ESCRT-III) which is involved in multivesicular bodies (MVBs) formation and sorting of endosomal cargo proteins into MVBs. MVBs contain intraluminal vesicles (ILVs) that are generated by invagination and scission from the limiting membrane of the endosome and mostly are delivered to lysosomes enabling degradation of membrane proteins, such as stimulated growth factor receptors, lysosomal enzymes and lipids. The MVB pathway appears to require the sequential function of ESCRT-O, -I,-II and -III complexes. ESCRT-III proteins mostly dissociate from the invaginating membrane before the ILV is released. The ESCRT machinery also functions in topologically equivalent membrane fission events, such as the terminal stages of cytokinesis. ESCRT-III proteins are believed to mediate the necessary vesicle extrusion and/or membrane fission activities, possibly in conjunction with the AAA ATPase VPS4. Involved in cytokinesis. Involved in recruiting VPS4A and/or VPS4B to the midbody of dividing cells. May also be involved in chromosome condensation. Targets the Polycomb group (PcG) protein BMI1/PCGF4 to regions of condensed chromatin. May play a role in stable cell cycle progression and in PcG gene silencing. The protein is Charged multivesicular body protein 1a (Chmp1a) of Mus musculus (Mouse).